The chain runs to 82 residues: Protein Vpu (82 aa).

Residues 1–7 (MQPLQIS) lie on the Extracellular side of the membrane. Residues 8–28 (AIVALVVAAIIAIVVWSIALL) traverse the membrane as a helical segment. Residues 29–82 (EYRKLLRQRKIDRLIDRIRERAEDSGNESEGDQEELSALVEMGGHDAPWDIDDL) lie on the Cytoplasmic side of the membrane. Phosphoserine; by host CK2 occurs at positions 53 and 57.

This sequence belongs to the HIV-1 VPU protein family. Homopentamer. Interacts with host CD4 and BRTC; these interactions induce proteasomal degradation of CD4. Interacts with host BST2; this interaction leads to the degradation of host BST2. Interacts with host FBXW11. Interacts with host AP1M1; this interaction plays a role in the mistrafficking and subsequent degradation of host BST2. Interacts with host RANBP2; this interaction allows Vpu to down-regulate host BLM sumoylation. In terms of processing, phosphorylated by host CK2. This phosphorylation is necessary for interaction with human BTRC and degradation of CD4.

The protein resides in the host membrane. Ion channel activity is inhibited by hexamethylene amiloride in vitro. Enhances virion budding by targeting host CD4 and Tetherin/BST2 to proteasome degradation. Degradation of CD4 prevents any unwanted premature interactions between viral Env and its host receptor CD4 in the endoplasmic reticulum. Degradation of antiretroviral protein Tetherin/BST2 is important for virion budding, as BST2 tethers new viral particles to the host cell membrane. Mechanistically, Vpu bridges either CD4 or BST2 to BTRC, a substrate recognition subunit of the Skp1/Cullin/F-box protein E3 ubiquitin ligase, induces their ubiquitination and subsequent proteasomal degradation. The alteration of the E3 ligase specificity by Vpu seems to promote the degradation of host IKBKB, leading to NF-kappa-B down-regulation and subsequent apoptosis. Acts as a viroporin that forms an oligomeric ion channel in membranes. Modulates the host DNA repair mechanisms to promote degradation of nuclear viral cDNA in cells that are already productively infected in order to suppress immune sensing and proviral hyper-integration (superinfection). Manipulates PML-NBs and modulates SUMOylation of host BLM protein thereby enhancing its DNA-end processing activity toward viral unintegrated linear DNA. Also inhibits RAD52-mediated homologous repair of viral cDNA, preventing the generation of dead-end circular forms of single copies of the long terminal repeat and permitting sustained nucleolytic attack. In Homo sapiens (Human), this protein is Protein Vpu.